The sequence spans 136 residues: NADPH-dependent 7-cyano-7-deazaguanine reductase (136 aa).

Cysteine 50 functions as the Thioimide intermediate in the catalytic mechanism. Residue aspartate 57 is the Proton donor of the active site. Substrate-binding positions include 72-74 (YEL) and 91-92 (HE).

It belongs to the GTP cyclohydrolase I family. QueF type 1 subfamily.

It is found in the cytoplasm. The catalysed reaction is 7-aminomethyl-7-carbaguanine + 2 NADP(+) = 7-cyano-7-deazaguanine + 2 NADPH + 3 H(+). It functions in the pathway tRNA modification; tRNA-queuosine biosynthesis. Catalyzes the NADPH-dependent reduction of 7-cyano-7-deazaguanine (preQ0) to 7-aminomethyl-7-deazaguanine (preQ1). This chain is NADPH-dependent 7-cyano-7-deazaguanine reductase, found in Prochlorococcus marinus (strain MIT 9515).